Reading from the N-terminus, the 237-residue chain is uncharacterized protein (237 aa).

The N-acetyltransferase domain occupies 119–237 (VTVRRLTPTD…PAGLDGGLPA (119 aa)).

This is an uncharacterized protein from Streptomyces virginiae (Streptomyces cinnamonensis).